A 71-amino-acid chain; its full sequence is Cytochrome c oxidase subunit 8C, mitochondrial (71 aa).

The N-terminal 28 residues, 1 to 28, are a transit peptide targeting the mitochondrion; that stretch reads MAHLPRVCPFIRRLRVALLCLRPGHRFA. The Mitochondrial matrix portion of the chain corresponds to 29 to 39; the sequence is HSEPQRQRPAS. The chain crosses the membrane as a helical span at residues 40 to 63; that stretch reads ALEMAVGIVVIFSAFLTPSAYVLS. At 64-71 the chain is on the mitochondrial intermembrane side; sequence NLSQFRRE.

It belongs to the cytochrome c oxidase VIII family. As to quaternary structure, component of the cytochrome c oxidase (complex IV, CIV), a multisubunit enzyme composed of 14 subunits. The complex is composed of a catalytic core of 3 subunits MT-CO1, MT-CO2 and MT-CO3, encoded in the mitochondrial DNA, and 11 supernumerary subunits COX4I, COX5A, COX5B, COX6A, COX6B, COX6C, COX7A, COX7B, COX7C, COX8 and NDUFA4, which are encoded in the nuclear genome. The complex exists as a monomer or a dimer and forms supercomplexes (SCs) in the inner mitochondrial membrane with NADH-ubiquinone oxidoreductase (complex I, CI) and ubiquinol-cytochrome c oxidoreductase (cytochrome b-c1 complex, complex III, CIII), resulting in different assemblies (supercomplex SCI(1)III(2)IV(1) and megacomplex MCI(2)III(2)IV(2)).

It localises to the mitochondrion inner membrane. It functions in the pathway energy metabolism; oxidative phosphorylation. Its function is as follows. Component of the cytochrome c oxidase, the last enzyme in the mitochondrial electron transport chain which drives oxidative phosphorylation. The respiratory chain contains 3 multisubunit complexes succinate dehydrogenase (complex II, CII), ubiquinol-cytochrome c oxidoreductase (cytochrome b-c1 complex, complex III, CIII) and cytochrome c oxidase (complex IV, CIV), that cooperate to transfer electrons derived from NADH and succinate to molecular oxygen, creating an electrochemical gradient over the inner membrane that drives transmembrane transport and the ATP synthase. Cytochrome c oxidase is the component of the respiratory chain that catalyzes the reduction of oxygen to water. Electrons originating from reduced cytochrome c in the intermembrane space (IMS) are transferred via the dinuclear copper A center (CU(A)) of subunit 2 and heme A of subunit 1 to the active site in subunit 1, a binuclear center (BNC) formed by heme A3 and copper B (CU(B)). The BNC reduces molecular oxygen to 2 water molecules using 4 electrons from cytochrome c in the IMS and 4 protons from the mitochondrial matrix. The polypeptide is Cytochrome c oxidase subunit 8C, mitochondrial (COX8C) (Eulemur fulvus fulvus (Brown lemur)).